We begin with the raw amino-acid sequence, 147 residues long: Large ribosomal subunit protein uL15 (147 aa).

Basic and acidic residues predominate over residues methionine 1 to glutamate 15. Positions methionine 1 to arginine 47 are disordered. Residues arginine 23–histidine 35 are compositionally biased toward gly residues.

This sequence belongs to the universal ribosomal protein uL15 family. Part of the 50S ribosomal subunit.

Binds to the 23S rRNA. The protein is Large ribosomal subunit protein uL15 of Alkaliphilus metalliredigens (strain QYMF).